A 1606-amino-acid polypeptide reads, in one-letter code: E3 ubiquitin-protein ligase HECW1 (1606 aa).

Positions 182–318 (SAAPIFKSIG…LERHAIGDRV (137 aa)) constitute a C2 domain. Disordered regions lie at residues 349-418 (DDEE…PAEE), 459-538 (AEQL…CSLP), 566-672 (LLHS…SCEG), and 730-815 (STVF…SQLP). The span at 354–373 (SLSTEPESAQIQDSPMNNLM) shows a compositional bias: polar residues. A compositionally biased stretch (basic and acidic residues) spans 380–392 (PRSEAPESSESWK). Acidic residues-rich tracts occupy residues 500-511 (EEEEKEQEEEGD) and 579-588 (AEEEDGAEEE). Residues 589–600 (STLKDSSEKDGL) show a composition bias toward basic and acidic residues. The segment covering 612–621 (ALEEDREEPE) has biased composition (acidic residues). Polar residues-rich tracts occupy residues 651 to 663 (HPSTGSESDSSPR), 751 to 765 (DSMQSPELDPESTNG), and 806 to 815 (HNSQPVSQLP). Residues 829–862 (EPLPPNWEARIDSHGRVFYVDHVNRTTTWQRPTA) enclose the WW 1 domain. A coiled-coil region spans residues 870 to 901 (RRSGSIQQMEQLNRRYQNIQRTIATERSEEDS). Phosphoserine is present on residues S874, S937, and S939. The segment at 894 to 938 (TERSEEDSGSQSCEQAPAGGGGGGGSDSEAESSQSSLDLRREGSL) is disordered. The 34-residue stretch at 1018–1051 (LELPRGWEIKTDQQGKSFFVDHNSRATTFIDPRI) folds into the WW 2 domain. The HECT domain maps to 1271 to 1606 (SRKELQRNKL…VEETSTFGLE (336 aa)). C1574 acts as the Glycyl thioester intermediate in catalysis.

As to quaternary structure, interacts with DVL1 and SSR3. Also interacts with mutant SOD1. Predominantly expressed in neurons of adult and fetal brain. Weakly expressed in the kidney.

It localises to the cytoplasm. The catalysed reaction is S-ubiquitinyl-[E2 ubiquitin-conjugating enzyme]-L-cysteine + [acceptor protein]-L-lysine = [E2 ubiquitin-conjugating enzyme]-L-cysteine + N(6)-ubiquitinyl-[acceptor protein]-L-lysine.. Its pathway is protein modification; protein ubiquitination. In terms of biological role, E3 ubiquitin-protein ligase that mediates ubiquitination and subsequent degradation of DVL1. Also targets the mutant SOD1 protein involved in familial amyotrophic lateral sclerosis (FALS). Forms cytotoxic aggregates with DVL1, SSR3 and mutant SOD1 that lead to motor neuron death in FALS. The chain is E3 ubiquitin-protein ligase HECW1 (HECW1) from Homo sapiens (Human).